Reading from the N-terminus, the 357-residue chain is Alanine racemase (357 aa).

Residue Lys33 is the Proton acceptor; specific for D-alanine of the active site. Residue Lys33 is modified to N6-(pyridoxal phosphate)lysine. Arg129 contacts substrate. The Proton acceptor; specific for L-alanine role is filled by Tyr253. Met301 is a substrate binding site.

The protein belongs to the alanine racemase family. Pyridoxal 5'-phosphate is required as a cofactor.

The enzyme catalyses L-alanine = D-alanine. It participates in amino-acid biosynthesis; D-alanine biosynthesis; D-alanine from L-alanine: step 1/1. Its function is as follows. Catalyzes the interconversion of L-alanine and D-alanine. May also act on other amino acids. The sequence is that of Alanine racemase (alr) from Pseudomonas syringae pv. syringae (strain B728a).